A 260-amino-acid chain; its full sequence is 3'-5' ssDNA/RNA exonuclease TatD (260 aa).

Residues E92, H128, and H153 each coordinate a divalent metal cation.

The protein belongs to the metallo-dependent hydrolases superfamily. TatD-type hydrolase family. TatD subfamily. Monomer. Mg(2+) is required as a cofactor.

Its subcellular location is the cytoplasm. Its function is as follows. 3'-5' exonuclease that prefers single-stranded DNA and RNA. May play a role in the H(2)O(2)-induced DNA damage repair. This is 3'-5' ssDNA/RNA exonuclease TatD from Pectobacterium parmentieri (strain WPP163) (Pectobacterium wasabiae (strain WPP163)).